We begin with the raw amino-acid sequence, 258 residues long: Imidazole glycerol phosphate synthase subunit HisF (258 aa).

Residues Asp11 and Asp130 contribute to the active site.

This sequence belongs to the HisA/HisF family. As to quaternary structure, heterodimer of HisH and HisF.

The protein resides in the cytoplasm. It carries out the reaction 5-[(5-phospho-1-deoxy-D-ribulos-1-ylimino)methylamino]-1-(5-phospho-beta-D-ribosyl)imidazole-4-carboxamide + L-glutamine = D-erythro-1-(imidazol-4-yl)glycerol 3-phosphate + 5-amino-1-(5-phospho-beta-D-ribosyl)imidazole-4-carboxamide + L-glutamate + H(+). It participates in amino-acid biosynthesis; L-histidine biosynthesis; L-histidine from 5-phospho-alpha-D-ribose 1-diphosphate: step 5/9. Functionally, IGPS catalyzes the conversion of PRFAR and glutamine to IGP, AICAR and glutamate. The HisF subunit catalyzes the cyclization activity that produces IGP and AICAR from PRFAR using the ammonia provided by the HisH subunit. This chain is Imidazole glycerol phosphate synthase subunit HisF, found in Methylobacterium nodulans (strain LMG 21967 / CNCM I-2342 / ORS 2060).